Reading from the N-terminus, the 86-residue chain is Small ribosomal subunit protein uS17 (86 aa).

The protein belongs to the universal ribosomal protein uS17 family. In terms of assembly, part of the 30S ribosomal subunit.

Its function is as follows. One of the primary rRNA binding proteins, it binds specifically to the 5'-end of 16S ribosomal RNA. The polypeptide is Small ribosomal subunit protein uS17 (Helicobacter acinonychis (strain Sheeba)).